The chain runs to 284 residues: NAD kinase (284 aa).

Catalysis depends on Asp71, which acts as the Proton acceptor. NAD(+)-binding positions include 71-72 (DG), 144-145 (ND), Asp174, 185-190 (TAYNLS), and Gln242.

The protein belongs to the NAD kinase family. A divalent metal cation is required as a cofactor.

The protein resides in the cytoplasm. It catalyses the reaction NAD(+) + ATP = ADP + NADP(+) + H(+). Functionally, involved in the regulation of the intracellular balance of NAD and NADP, and is a key enzyme in the biosynthesis of NADP. Catalyzes specifically the phosphorylation on 2'-hydroxyl of the adenosine moiety of NAD to yield NADP. This Sulfurimonas denitrificans (strain ATCC 33889 / DSM 1251) (Thiomicrospira denitrificans (strain ATCC 33889 / DSM 1251)) protein is NAD kinase.